Consider the following 194-residue polypeptide: Leucyl/phenylalanyl-tRNA--protein transferase (194 aa).

This sequence belongs to the L/F-transferase family.

It is found in the cytoplasm. The catalysed reaction is N-terminal L-lysyl-[protein] + L-leucyl-tRNA(Leu) = N-terminal L-leucyl-L-lysyl-[protein] + tRNA(Leu) + H(+). It carries out the reaction N-terminal L-arginyl-[protein] + L-leucyl-tRNA(Leu) = N-terminal L-leucyl-L-arginyl-[protein] + tRNA(Leu) + H(+). The enzyme catalyses L-phenylalanyl-tRNA(Phe) + an N-terminal L-alpha-aminoacyl-[protein] = an N-terminal L-phenylalanyl-L-alpha-aminoacyl-[protein] + tRNA(Phe). Its function is as follows. Functions in the N-end rule pathway of protein degradation where it conjugates Leu, Phe and, less efficiently, Met from aminoacyl-tRNAs to the N-termini of proteins containing an N-terminal arginine or lysine. This chain is Leucyl/phenylalanyl-tRNA--protein transferase, found in Prosthecochloris aestuarii (strain DSM 271 / SK 413).